A 314-amino-acid polypeptide reads, in one-letter code: Putative peptide transport system permease protein BruAb2_1031 (314 aa).

The next 6 helical transmembrane spans lie at 12–32 (AIPV…LLPG), 101–121 (LALL…VVAA), 135–155 (LALL…VILF), 177–197 (WLRS…GYLA), 237–257 (VSVL…SVVI), and 286–306 (MLFL…LYTI). The region spanning 95–304 (LPVTISLALL…AINVLVDILY (210 aa)) is the ABC transmembrane type-1 domain.

The protein belongs to the binding-protein-dependent transport system permease family. As to quaternary structure, the complex is composed of two ATP-binding proteins (BruAb2_1033 and BruAb2_1034), two transmembrane proteins (BruAb2_1031 and BruAb2_1032) and a solute-binding protein (BruAb2_1030).

It is found in the cell inner membrane. Its function is as follows. Probably part of an ABC transporter complex that could be involved in peptide import. Probably responsible for the translocation of the substrate across the membrane. This is Putative peptide transport system permease protein BruAb2_1031 from Brucella abortus biovar 1 (strain 9-941).